The following is a 386-amino-acid chain: Agamous-like MADS-box protein AGL30 (386 aa).

Positions 1-53 (MGRVKLKIKKLENTNGRQSTFAKRKNGILKKANELSILCDIDIVLLMFSPTGK) constitute an MADS-box domain. Positions 341–360 (PDSSAYNDNTNQTRFGSSSS) are disordered. Positions 344–356 (SAYNDNTNQTRFG) are enriched in polar residues.

In terms of assembly, forms heterodimers with AGL66 and AGL104. Expressed in pollen.

The protein localises to the nucleus. Probable transcription factor that forms heterodimers with the MADS-box proteins AGL66 and AGL104 and is involved in the regulation of pollen maturation at the late stages of pollen development and pollen tube growth. This Arabidopsis thaliana (Mouse-ear cress) protein is Agamous-like MADS-box protein AGL30.